Here is a 482-residue protein sequence, read N- to C-terminus: Cobyrinate a,c-diamide synthase (482 aa).

Residues 248 to 441 (RLAIAQDQAF…LHLHWGSQIS (194 aa)) enclose the GATase cobBQ-type domain. The active-site Nucleophile is cysteine 331.

This sequence belongs to the CobB/CbiA family. It depends on Mg(2+) as a cofactor.

The enzyme catalyses cob(II)yrinate + 2 L-glutamine + 2 ATP + 2 H2O = cob(II)yrinate a,c diamide + 2 L-glutamate + 2 ADP + 2 phosphate + 2 H(+). It participates in cofactor biosynthesis; adenosylcobalamin biosynthesis; cob(II)yrinate a,c-diamide from sirohydrochlorin (anaerobic route): step 10/10. Catalyzes the ATP-dependent amidation of the two carboxylate groups at positions a and c of cobyrinate, using either L-glutamine or ammonia as the nitrogen source. The polypeptide is Cobyrinate a,c-diamide synthase (Synechocystis sp. (strain ATCC 27184 / PCC 6803 / Kazusa)).